Reading from the N-terminus, the 420-residue chain is 3-isopropylmalate dehydratase large subunit (420 aa).

The [4Fe-4S] cluster site is built by Cys301, Cys361, and Cys364.

The protein belongs to the aconitase/IPM isomerase family. LeuC type 2 subfamily. In terms of assembly, heterodimer of LeuC and LeuD. The cofactor is [4Fe-4S] cluster.

It carries out the reaction (2R,3S)-3-isopropylmalate = (2S)-2-isopropylmalate. Its pathway is amino-acid biosynthesis; L-leucine biosynthesis; L-leucine from 3-methyl-2-oxobutanoate: step 2/4. In terms of biological role, catalyzes the isomerization between 2-isopropylmalate and 3-isopropylmalate, via the formation of 2-isopropylmaleate. This is 3-isopropylmalate dehydratase large subunit from Desulfovibrio desulfuricans (strain ATCC 27774 / DSM 6949 / MB).